The primary structure comprises 721 residues: Protein quick-to-court (721 aa).

Disordered regions lie at residues 1–42 (MMTS…RIPH), 143–210 (VGNS…ASVA), 360–379 (SSPE…EAEL), 393–428 (DEGN…MQSS), and 441–471 (SSVH…CGAG). Residues 17–31 (QVQREKDNDSAEDSH) are compositionally biased toward basic and acidic residues. The segment covering 161–201 (NGGSDISSSGTSSSSSNNKESSPRTTRTPRTPQTPQTPQTP) has biased composition (low complexity). The segment covering 362–379 (PEERSASSDAVTVREAEL) has biased composition (basic and acidic residues). The span at 406-420 (RQQQQQANHSLQAMQ) shows a compositional bias: low complexity. Polar residues predominate over residues 441–454 (SSVHSKDSQTQSEA). Residues 511–569 (KRSHNDKVEALLQKLAECNTRYSDMVPDYEQAKQRIRELEKQLEDLQRKLIEHEEKQNK) are a coiled coil. A GRIP domain is found at 668–716 (HVDPEVTLQFLKSAIFYFLTDKENSQGHLQAIESILEFTDAEKQKISAA).

Expressed in the third antennal segment and the maxillary palp, with increased expression near the cuticle of both olfactory organs. Also detected in the second antenna segment. In the brain, expressed in the central nervous system, with high levels of expression in the visual system including the retina and optic lobe, and uniform expression in the cortex. Detected in the thorax and abdomen, with increased expression in the ventral ganglion. In males, detected in the reproductive tract including the ejaculatory bulb and testis.

In adult males, modulates sexual behavior by playing a role in sex discrimination and maintaining normal levels of sexual activity towards both males and females. In Drosophila melanogaster (Fruit fly), this protein is Protein quick-to-court.